The chain runs to 440 residues: Protein C-ets-1 (440 aa).

N6-acetyllysine; alternate is present on residues K8 and K15. Residues K8 and K15 each participate in a glycyl lysine isopeptide (Lys-Gly) (interchain with G-Cter in SUMO2); alternate cross-link. K15 participates in a covalent cross-link: Glycyl lysine isopeptide (Lys-Gly) (interchain with G-Cter in SUMO); alternate. Residue T38 is modified to Phosphothreonine; by MAPK. Positions 51-136 (ATFSGFTKEQ…EHLEILQKED (86 aa)) constitute a PNT domain. Residues 130-243 (EILQKEDVKP…DNMCLGRASR (114 aa)) form an activation domain; required for transcription activation region. K138 participates in a covalent cross-link: Glycyl lysine isopeptide (Lys-Gly) (interchain with G-Cter in SUMO2). Phosphotyrosine is present on Y223. K227 is covalently cross-linked (Glycyl lysine isopeptide (Lys-Gly) (interchain with G-Cter in SUMO)). Residue S251 is modified to Phosphoserine; by CaMK2. S254 is modified (phosphoserine). T265 carries the phosphothreonine modification. Residues S267 and S270 each carry the phosphoserine modification. Phosphoserine; by CaMK2 occurs at positions 282 and 285. Residues 304–312 (FKDYVRDRA) are helix HI-1. K305 is subject to N6-acetyllysine. Residues 323–330 (AAALAGYT) form a helix HI-2 region. Positions 335–415 (IQLWQFLLEL…AGKRYVYRFV (81 aa)) form a DNA-binding region, ETS. Positions 418–422 (LQSLL) are helix H4. The tract at residues 426–432 (PEELHAM) is helix H5.

Belongs to the ETS family. In terms of assembly, binds DNA as a homodimer; homodimerization is required for transcription activation. Interacts with MAF and MAFB. Interacts with PAX5; the interaction alters DNA-binding properties. Interacts with DAXX. Interacts with UBE2I. Interacts with SP100; the interaction is direct and modulates ETS1 transcriptional activity. Post-translationally, phosphorylation at Ser-251, Ser-282 and Ser-285 by CaMK2/CaMKII in response to calcium signaling decreases affinity for DNA: an increasing number of phosphoserines causes DNA-binding to become progressively weaker. Sumoylated on Lys-15 and Lys-227, preferentially with SUMO2; which inhibits transcriptional activity. In terms of processing, ubiquitinated; which induces proteasomal degradation.

It localises to the nucleus. Its subcellular location is the cytoplasm. Its activity is regulated as follows. Autoinhibited by a module composed of four alpha helices (HI-1, HI-2, H4, and H5) that flank the DNA-binding ETS domain, reducing the affinity for DNA. Phosphorylation by CaMK2/CaMKII in response to calcium signaling decreases affinity for DNA. Functionally, transcription factor. Directly controls the expression of cytokine and chemokine genes in a wide variety of different cellular contexts. May control the differentiation, survival and proliferation of lymphoid cells. May also regulate angiogenesis through regulation of expression of genes controlling endothelial cell migration and invasion. The protein is Protein C-ets-1 (Ets1) of Mus musculus (Mouse).